The following is a 348-amino-acid chain: UDP-3-O-acylglucosamine N-acyltransferase (348 aa).

His-248 functions as the Proton acceptor in the catalytic mechanism.

This sequence belongs to the transferase hexapeptide repeat family. LpxD subfamily. Homotrimer.

It catalyses the reaction a UDP-3-O-[(3R)-3-hydroxyacyl]-alpha-D-glucosamine + a (3R)-hydroxyacyl-[ACP] = a UDP-2-N,3-O-bis[(3R)-3-hydroxyacyl]-alpha-D-glucosamine + holo-[ACP] + H(+). It functions in the pathway bacterial outer membrane biogenesis; LPS lipid A biosynthesis. Catalyzes the N-acylation of UDP-3-O-acylglucosamine using 3-hydroxyacyl-ACP as the acyl donor. Is involved in the biosynthesis of lipid A, a phosphorylated glycolipid that anchors the lipopolysaccharide to the outer membrane of the cell. This Rippkaea orientalis (strain PCC 8801 / RF-1) (Cyanothece sp. (strain PCC 8801)) protein is UDP-3-O-acylglucosamine N-acyltransferase.